A 147-amino-acid chain; its full sequence is Large ribosomal subunit protein uL11 (147 aa).

Belongs to the universal ribosomal protein uL11 family. Part of the ribosomal stalk of the 50S ribosomal subunit. Interacts with L10 and the large rRNA to form the base of the stalk. L10 forms an elongated spine to which L12 dimers bind in a sequential fashion forming a multimeric L10(L12)X complex. One or more lysine residues are methylated.

Functionally, forms part of the ribosomal stalk which helps the ribosome interact with GTP-bound translation factors. The chain is Large ribosomal subunit protein uL11 from Thermus thermophilus (strain ATCC BAA-163 / DSM 7039 / HB27).